We begin with the raw amino-acid sequence, 232 residues long: Small ribosomal subunit protein uS2 (232 aa).

It belongs to the universal ribosomal protein uS2 family.

The protein is Small ribosomal subunit protein uS2 of Baumannia cicadellinicola subsp. Homalodisca coagulata.